Reading from the N-terminus, the 50-residue chain is Sperm protamine P1 (50 aa).

This sequence belongs to the protamine P1 family. In terms of tissue distribution, testis.

It localises to the nucleus. Its subcellular location is the chromosome. Its function is as follows. Protamines substitute for histones in the chromatin of sperm during the haploid phase of spermatogenesis. They compact sperm DNA into a highly condensed, stable and inactive complex. The sequence is that of Sperm protamine P1 (PRM1) from Trachypithecus phayrei (Phayre's leaf monkey).